A 432-amino-acid chain; its full sequence is Asparagine--tRNA ligase (432 aa).

This sequence belongs to the class-II aminoacyl-tRNA synthetase family. As to quaternary structure, homodimer.

It is found in the cytoplasm. The catalysed reaction is tRNA(Asn) + L-asparagine + ATP = L-asparaginyl-tRNA(Asn) + AMP + diphosphate + H(+). The polypeptide is Asparagine--tRNA ligase (Lactobacillus johnsonii (strain CNCM I-12250 / La1 / NCC 533)).